Consider the following 683-residue polypeptide: MLRIENTVCKSACRVDSATAQPVYSSFDGENFKAEIHSKLDSFERKLNASPTYRDEEGGGNPEHYETLSQEINDLQSQIENLSLEVENLQGSSSSPSNVAAALAELSQSIRTIKEQLEANRKERYNLTVTVANLTAAVNAAKKTGSESTTATATTTTNYETQLKAFEAQIKALDNQLQTQKNLVQTTSVEAKNDRDSLRKTIEVIRLTVKTLQDQVESQTGPKKRRKSPIENQPTAGSELATLTTNLTFLTQRVEKLSQGVATHTTAMFTLEETMKKVHTTLQEATASNTNNIDAIRTRVQELADKIALFDQVQYSVGYEMAKKNPDSTKLRTDLDSAISTVNEEKKSLLTVKDSVQSLKTQLDELKRTLENDGDVSSLRQTVHDMASSIRDETATIYNKINALEEGLKRGGQTTTTPLTQLQTRVEEIDKTIVKWNNQHGEWTTRLNKLEAGVSNNQTLMNRFIQQVNGDVNPLKELPAELETFKMTITNTWAQLNKKFLDFSAKTDTSVDNFTKKFTEIHPQIASLVDKMDQQIRDNPHTTEKLMDEIRQLKSAMTRLGTQSSGKPIFSINTKSSYNEKSKKTIFGHPGIIFPETVKISSIYITLAAKEADGKEDARLFELTATSTHNNITSTIKQFEKKCTEETILEDYNPPLVIDAQTKLVLSCNQKVFGVAIFTLQYS.

3 coiled-coil regions span residues 62–124 (PEHY…RKER), 155–259 (TTTN…KLSQ), and 346–376 (KKSLLTVKDSVQSLKTQLDELKRTLENDGDV). The disordered stretch occupies residues 213 to 237 (QDQVESQTGPKKRRKSPIENQPTAG).

This is an uncharacterized protein from Invertebrate iridescent virus 3 (IIV-3).